A 216-amino-acid polypeptide reads, in one-letter code: GTP cyclohydrolase 1 (216 aa).

Residues cysteine 109, histidine 112, and cysteine 180 each coordinate Zn(2+).

This sequence belongs to the GTP cyclohydrolase I family. Toroid-shaped homodecamer, composed of two pentamers of five dimers.

The enzyme catalyses GTP + H2O = 7,8-dihydroneopterin 3'-triphosphate + formate + H(+). It participates in cofactor biosynthesis; 7,8-dihydroneopterin triphosphate biosynthesis; 7,8-dihydroneopterin triphosphate from GTP: step 1/1. This is GTP cyclohydrolase 1 from Wigglesworthia glossinidia brevipalpis.